A 126-amino-acid polypeptide reads, in one-letter code: Histone H2B type 3-B (126 aa).

A compositionally biased stretch (low complexity) spans 1–12 (MPDPSKSAPAPK). A disordered region spans residues 1–35 (MPDPSKSAPAPKKGSKKAVTKAQKKDGKKRKRGRK). An N-acetylproline modification is found at P2. Residue K6 is modified to N6-(2-hydroxyisobutyryl)lysine; alternate. Residue K6 is modified to N6-(beta-hydroxybutyryl)lysine; alternate. N6-acetyllysine; alternate is present on K6. K6 is subject to N6-butyryllysine; alternate. At K6 the chain carries N6-crotonyllysine; alternate. K6 carries the post-translational modification N6-lactoyllysine; alternate. K6 is covalently cross-linked (Glycyl lysine isopeptide (Lys-Gly) (interchain with G-Cter in SUMO2); alternate). S7 carries the post-translational modification ADP-ribosylserine. The residue at position 12 (K12) is an N6-(beta-hydroxybutyryl)lysine; alternate. Residues K12 and K13 each carry the N6-acetyllysine; alternate modification. Residues K12 and K13 each carry the N6-crotonyllysine; alternate modification. Position 12 is an N6-lactoyllysine; alternate (K12). Residue K13 is modified to N6-(2-hydroxyisobutyryl)lysine; alternate. A Phosphoserine; by STK4/MST1 modification is found at S15. K16, K17, K21, and K24 each carry N6-acetyllysine; alternate. N6-crotonyllysine; alternate is present on residues K16, K17, K21, and K24. Residues K16, K17, K21, and K24 each carry the N6-lactoyllysine; alternate modification. N6-(beta-hydroxybutyryl)lysine; alternate occurs at positions 17 and 21. Residue K17 is modified to N6-glutaryllysine; alternate. K21 and K24 each carry N6-(2-hydroxyisobutyryl)lysine; alternate. K21 carries the post-translational modification N6-butyryllysine; alternate. K21 is covalently cross-linked (Glycyl lysine isopeptide (Lys-Gly) (interchain with G-Cter in SUMO2); alternate). Position 25 is an N6-(2-hydroxyisobutyryl)lysine (K25). The residue at position 35 (K35) is an N6-(2-hydroxyisobutyryl)lysine; alternate. The residue at position 35 (K35) is an N6-(beta-hydroxybutyryl)lysine; alternate. K35 is subject to N6-crotonyllysine; alternate. K35 is modified (N6-glutaryllysine; alternate). Residue K35 is modified to N6-succinyllysine; alternate. K35 participates in a covalent cross-link: Glycyl lysine isopeptide (Lys-Gly) (interchain with G-Cter in ubiquitin); alternate. E36 carries the post-translational modification PolyADP-ribosyl glutamic acid. S37 is modified (phosphoserine; by AMPK). N6-(2-hydroxyisobutyryl)lysine; alternate is present on residues K44, K47, and K58. K44 carries the post-translational modification N6-lactoyllysine; alternate. An N6-glutaryllysine; alternate mark is found at K44 and K47. N6-methyllysine; alternate is present on K47. An N6,N6-dimethyllysine; alternate modification is found at K58. Dimethylated arginine is present on R80. The residue at position 86 (K86) is an N6-(2-hydroxyisobutyryl)lysine; alternate. K86 carries the N6-(beta-hydroxybutyryl)lysine; alternate modification. K86 is modified (N6-acetyllysine; alternate). K86 carries the post-translational modification N6-lactoyllysine; alternate. K86 is modified (N6,N6,N6-trimethyllysine; alternate). Omega-N-methylarginine is present on residues R87 and R93. K109 bears the N6-(2-hydroxyisobutyryl)lysine; alternate mark. At K109 the chain carries N6-lactoyllysine; alternate. The residue at position 109 (K109) is an N6-glutaryllysine; alternate. K109 carries the N6-methyllysine; alternate modification. Residue S113 is glycosylated (O-linked (GlcNAc) serine). T116 carries the post-translational modification Phosphothreonine. 2 positions are modified to N6-(2-hydroxyisobutyryl)lysine; alternate: K117 and K121. N6-(beta-hydroxybutyryl)lysine; alternate is present on residues K117 and K121. An N6-lactoyllysine; alternate mark is found at K117 and K121. Residues K117 and K121 each carry the N6-glutaryllysine; alternate modification. N6-succinyllysine; alternate occurs at positions 117 and 121. K117 is subject to N6-malonyllysine; alternate. N6-methylated lysine; alternate is present on K117. K121 is covalently cross-linked (Glycyl lysine isopeptide (Lys-Gly) (interchain with G-Cter in ubiquitin); alternate).

This sequence belongs to the histone H2B family. As to quaternary structure, the nucleosome is a histone octamer containing two molecules each of H2A, H2B, H3 and H4 assembled in one H3-H4 heterotetramer and two H2A-H2B heterodimers. The octamer wraps approximately 147 bp of DNA. Monoubiquitination at Lys-35 (H2BK34Ub) by the MSL1/MSL2 dimer is required for histone H3 'Lys-4' (H3K4me) and 'Lys-79' (H3K79me) methylation and transcription activation at specific gene loci, such as HOXA9 and MEIS1 loci. Similarly, monoubiquitination at Lys-121 (H2BK120Ub) by the RNF20/40 complex gives a specific tag for epigenetic transcriptional activation and is also prerequisite for histone H3 'Lys-4' and 'Lys-79' methylation. It also functions cooperatively with the FACT dimer to stimulate elongation by RNA polymerase II. H2BK120Ub also acts as a regulator of mRNA splicing: deubiquitination by USP49 is required for efficient cotranscriptional splicing of a large set of exons. Post-translationally, phosphorylation at Ser-37 (H2BS36ph) by AMPK in response to stress promotes transcription. Phosphorylated on Ser-15 (H2BS14ph) by STK4/MST1 during apoptosis; which facilitates apoptotic chromatin condensation. Also phosphorylated on Ser-15 in response to DNA double strand breaks (DSBs), and in correlation with somatic hypermutation and immunoglobulin class-switch recombination. In terms of processing, glcNAcylation at Ser-113 promotes monoubiquitination of Lys-121. It fluctuates in response to extracellular glucose, and associates with transcribed genes. ADP-ribosylated by PARP1 or PARP2 on Ser-7 (H2BS6ADPr) in response to DNA damage. H2BS6ADPr promotes recruitment of CHD1L. Poly ADP-ribosylation on Glu-36 (H2BE35ADPr) by PARP1 regulates adipogenesis: it inhibits phosphorylation at Ser-37 (H2BS36ph), thereby blocking expression of pro-adipogenetic genes. Post-translationally, crotonylation (Kcr) is specifically present in male germ cells and marks testis-specific genes in post-meiotic cells, including X-linked genes that escape sex chromosome inactivation in haploid cells. Crotonylation marks active promoters and enhancers and confers resistance to transcriptional repressors. It is also associated with post-meiotically activated genes on autosomes. In terms of processing, lactylated in macrophages by EP300/P300 by using lactoyl-CoA directly derived from endogenous or exogenous lactate, leading to stimulates gene transcription.

It is found in the nucleus. The protein localises to the chromosome. In terms of biological role, core component of nucleosome. Nucleosomes wrap and compact DNA into chromatin, limiting DNA accessibility to the cellular machineries which require DNA as a template. Histones thereby play a central role in transcription regulation, DNA repair, DNA replication and chromosomal stability. DNA accessibility is regulated via a complex set of post-translational modifications of histones, also called histone code, and nucleosome remodeling. In Homo sapiens (Human), this protein is Histone H2B type 3-B.